The primary structure comprises 252 residues: Trans-aconitate 2-methyltransferase (252 aa).

This sequence belongs to the methyltransferase superfamily. Tam family.

Its subcellular location is the cytoplasm. The enzyme catalyses trans-aconitate + S-adenosyl-L-methionine = (E)-3-(methoxycarbonyl)pent-2-enedioate + S-adenosyl-L-homocysteine. Its function is as follows. Catalyzes the S-adenosylmethionine monomethyl esterification of trans-aconitate. In Escherichia coli O7:K1 (strain IAI39 / ExPEC), this protein is Trans-aconitate 2-methyltransferase.